A 210-amino-acid polypeptide reads, in one-letter code: Putative 3-methyladenine DNA glycosylase (210 aa).

This sequence belongs to the DNA glycosylase MPG family.

The sequence is that of Putative 3-methyladenine DNA glycosylase from Corynebacterium glutamicum (strain R).